The chain runs to 551 residues: L-lactate permease (551 aa).

Helical transmembrane passes span 13–33 (NIWL…FALI), 37–57 (LKGY…ALLF), 69–89 (VVYG…AAVF), 131–151 (GAAG…GLGF), 159–179 (LCLI…PILV), 194–214 (MVGR…MAIM), 245–265 (IGPE…LTLF), 306–326 (FLFL…ALFA), 366–386 (FDWF…SIVW), 405–425 (LALP…SNYS), 438–458 (TGSA…FLTG), and 530–550 (IFTC…TWMI).

It belongs to the lactate permease family.

The protein localises to the cell inner membrane. The catalysed reaction is (S)-lactate(in) + H(+)(in) = (S)-lactate(out) + H(+)(out). The enzyme catalyses (R)-lactate(in) + H(+)(in) = (R)-lactate(out) + H(+)(out). It catalyses the reaction glycolate(in) + H(+)(in) = glycolate(out) + H(+)(out). Uptake of L-lactate across the membrane. Can also transport D-lactate and glycolate. Seems to be driven by a proton motive force. The sequence is that of L-lactate permease (lldP) from Salmonella typhi.